The sequence spans 253 residues: Triosephosphate isomerase (253 aa).

15–17 contributes to the substrate binding site; it reads NWK. His101 (electrophile) is an active-site residue. Glu171 serves as the catalytic Proton acceptor. Residues Gly177, Ser216, and 237-238 contribute to the substrate site; that span reads GG.

This sequence belongs to the triosephosphate isomerase family. Homodimer.

Its subcellular location is the cytoplasm. The catalysed reaction is D-glyceraldehyde 3-phosphate = dihydroxyacetone phosphate. The protein operates within carbohydrate biosynthesis; gluconeogenesis. Its pathway is carbohydrate degradation; glycolysis; D-glyceraldehyde 3-phosphate from glycerone phosphate: step 1/1. Involved in the gluconeogenesis. Catalyzes stereospecifically the conversion of dihydroxyacetone phosphate (DHAP) to D-glyceraldehyde-3-phosphate (G3P). In Caulobacter vibrioides (strain ATCC 19089 / CIP 103742 / CB 15) (Caulobacter crescentus), this protein is Triosephosphate isomerase.